The primary structure comprises 454 residues: Phosphoglucosamine mutase (454 aa).

The Phosphoserine intermediate role is filled by serine 104. Residues serine 104, aspartate 241, aspartate 243, and aspartate 245 each contribute to the Mg(2+) site. Serine 104 is subject to Phosphoserine.

Belongs to the phosphohexose mutase family. Mg(2+) is required as a cofactor. Post-translationally, activated by phosphorylation.

The enzyme catalyses alpha-D-glucosamine 1-phosphate = D-glucosamine 6-phosphate. Catalyzes the conversion of glucosamine-6-phosphate to glucosamine-1-phosphate. The chain is Phosphoglucosamine mutase from Paenarthrobacter aurescens (strain TC1).